The chain runs to 445 residues: GTPase Der (445 aa).

2 consecutive EngA-type G domains span residues 2 to 166 (FRVA…PEYE) and 182 to 355 (IKVA…NQAW). GTP contacts are provided by residues 8 to 15 (GIPNVGKS), 55 to 59 (DTGGY), 118 to 121 (NKID), 188 to 195 (GKPNAGKS), 235 to 239 (DTAGM), and 300 to 303 (NKID). The region spanning 356 to 440 (KRVGTGQLNR…PIKLIFRGKE (85 aa)) is the KH-like domain.

It belongs to the TRAFAC class TrmE-Era-EngA-EngB-Septin-like GTPase superfamily. EngA (Der) GTPase family. In terms of assembly, associates with the 50S ribosomal subunit.

Its function is as follows. GTPase that plays an essential role in the late steps of ribosome biogenesis. The polypeptide is GTPase Der (Sulfurihydrogenibium sp. (strain YO3AOP1)).